Consider the following 93-residue polypeptide: RNA-binding protein Hfq (93 aa).

One can recognise a Sm domain in the interval 9–68 (DPFLNALRRERVPVSIYLVNGIKLQGQVESFDQFVILLKNTVSQMVYKHAISTVVPARPF). The disordered stretch occupies residues 70-93 (VNSHTAAPSPAGGFNGQQDDNNDQ).

Belongs to the Hfq family. As to quaternary structure, homohexamer.

RNA chaperone that binds small regulatory RNA (sRNAs) and mRNAs to facilitate mRNA translational regulation in response to envelope stress, environmental stress and changes in metabolite concentrations. Also binds with high specificity to tRNAs. In Shewanella sediminis (strain HAW-EB3), this protein is RNA-binding protein Hfq.